The following is a 97-amino-acid chain: U6-theraphotoxin-Hhn1a 1 (97 aa).

The signal sequence occupies residues 1-33; the sequence is MLIKQFSRRSKNMKVQILLAFAALFVLAVGSYA. A propeptide spanning residues 34–61 is cleaved from the precursor; it reads SESKKLDLRDALFSAMFSADYQLNPQER. Intrachain disulfides connect Cys63-Cys77, Cys70-Cys82, and Cys76-Cys89.

This sequence belongs to the neurotoxin 10 (Hwtx-1) family. 12 (Hntx-12) subfamily. In terms of tissue distribution, expressed by the venom gland.

It is found in the secreted. Its function is as follows. Ion channel inhibitor. The protein is U6-theraphotoxin-Hhn1a 1 of Cyriopagopus hainanus (Chinese bird spider).